Consider the following 341-residue polypeptide: MKALSKLKAEEGIWMTDVPEPEVGHNDLLIKIRKTAICGTDVHIYNWDEWSQKTIPVPMVVGHEYVGEVVGIGQEVRGFKIGDRVSGEGHITCGHCRNCRAGRTHLCRNTIGVGVNRPGCFAEYLVIPAFNAFKIPDNISDDLASIFDPFGNAVHTALSFDLVGEDVLVSGAGPIGVMAAAVAKHVGARNVVITDVNEYRLELARKMGVTRAVNVAKENLNDVMAELGMTEGFDVGLEMSGAPPAFRSMLDTMNHGGRIAMLGIPPSDMSIDWTKVIFKGLFIKGIYGREMFETWYKMAALIQSGLDLSPIITHRFGIDDFQKGFDAMRSGQSGKVVLSWE.

Cys-38 serves as a coordination point for Zn(2+). Catalysis depends on charge relay system residues Thr-40 and His-43. Positions 63, 64, 93, 96, 99, and 107 each coordinate Zn(2+). NAD(+)-binding positions include Ile-175, Asp-195, Arg-200, 262-264, and 286-287; these read LGI and IY.

Belongs to the zinc-containing alcohol dehydrogenase family. In terms of assembly, homotetramer. Requires Zn(2+) as cofactor.

The protein localises to the cytoplasm. The enzyme catalyses L-threonine + NAD(+) = (2S)-2-amino-3-oxobutanoate + NADH + H(+). Its pathway is amino-acid degradation; L-threonine degradation via oxydo-reductase pathway; glycine from L-threonine: step 1/2. Catalyzes the NAD(+)-dependent oxidation of L-threonine to 2-amino-3-ketobutyrate. The sequence is that of L-threonine 3-dehydrogenase from Klebsiella pneumoniae (strain 342).